A 48-amino-acid chain; its full sequence is Protein TUNAR (48 aa).

A disordered region spans residues Met-1–Glu-20. Positions Asp-8–Glu-20 are enriched in basic and acidic residues. The helical transmembrane segment at Leu-24–Ile-44 threads the bilayer.

As to quaternary structure, interacts with ATPase ATP2A2/SERCA2. Interacts with ATPase ATP2A3/SERCA3; the interaction occurs at low levels in low glucose conditions and is increased by high glucose levels. As to expression, in the adult, expressed in Purkinje cells in the cerebellum, in motor neurons and interneurons in the spinal cord and in neurons of the cortex, hippocampus and thalamus (at protein level). Also detected in the developing cortex, hippocampus and thalamus at embryonic day E15.5 (at protein level).

The protein resides in the endoplasmic reticulum membrane. It is found in the extracellular vesicle membrane. Its function is as follows. In neurons, plays a role in the regulation of intracellular Ca(2+), possibly by acting as an activator of ATP2A2/SERCA2, thus increasing the efficiency with which Ca(2+) is removed from the cytoplasm. Inhibits differentiation of embryonic stem cells into neurons and inhibits neurite outgrowth, likely as a result of its role in intracellular Ca(2+) regulation. In pancreatic beta cells, lowers Ca(2+) levels in the endoplasmic reticulum and enhances glucose-stimulated insulin secretion. The polypeptide is Protein TUNAR (Mus musculus (Mouse)).